We begin with the raw amino-acid sequence, 165 residues long: Pyruvoyl-dependent arginine decarboxylase 1 (165 aa).

Ser-45 is subject to Pyruvic acid (Ser).

Belongs to the PdaD family. The cofactor is pyruvate.

It carries out the reaction L-arginine + H(+) = agmatine + CO2. In Methanosarcina mazei (strain ATCC BAA-159 / DSM 3647 / Goe1 / Go1 / JCM 11833 / OCM 88) (Methanosarcina frisia), this protein is Pyruvoyl-dependent arginine decarboxylase 1 (pdaD1).